Consider the following 136-residue polypeptide: Nucleoside diphosphate kinase (136 aa).

Lysine 10, phenylalanine 58, arginine 86, threonine 92, arginine 104, and asparagine 114 together coordinate ATP. Histidine 117 acts as the Pros-phosphohistidine intermediate in catalysis.

It belongs to the NDK family. In terms of assembly, homotetramer. The cofactor is Mg(2+).

It localises to the cytoplasm. The catalysed reaction is a 2'-deoxyribonucleoside 5'-diphosphate + ATP = a 2'-deoxyribonucleoside 5'-triphosphate + ADP. It catalyses the reaction a ribonucleoside 5'-diphosphate + ATP = a ribonucleoside 5'-triphosphate + ADP. Major role in the synthesis of nucleoside triphosphates other than ATP. The ATP gamma phosphate is transferred to the NDP beta phosphate via a ping-pong mechanism, using a phosphorylated active-site intermediate. This is Nucleoside diphosphate kinase from Corynebacterium efficiens (strain DSM 44549 / YS-314 / AJ 12310 / JCM 11189 / NBRC 100395).